The chain runs to 243 residues: Carboxy-S-adenosyl-L-methionine synthase (243 aa).

S-adenosyl-L-methionine contacts are provided by residues Tyr-40, 65–67, 90–91, 118–119, Asn-133, and Arg-200; these read GCS, DN, and DI.

Belongs to the class I-like SAM-binding methyltransferase superfamily. Cx-SAM synthase family. As to quaternary structure, homodimer.

The catalysed reaction is prephenate + S-adenosyl-L-methionine = carboxy-S-adenosyl-L-methionine + 3-phenylpyruvate + H2O. Catalyzes the conversion of S-adenosyl-L-methionine (SAM) to carboxy-S-adenosyl-L-methionine (Cx-SAM). This Shewanella sp. (strain MR-7) protein is Carboxy-S-adenosyl-L-methionine synthase.